We begin with the raw amino-acid sequence, 1012 residues long: MLILVGSKQGTMSSLASPVSLGSLMGVSSSGRSHSGVRRVSFSRGNCKGRKRWHCLSLSVCRYSVTTTDFIADQGNSVSLDSNSNSSSSSKSGGDDGTGFVLKPPPKPVLKAPDNRMTHLGPSRTTGDVEERNKVIESLGEVLEKAEKLGSSKVNGDKNNGSVNKPVRNNANASPRTERPVNSAASLKSKTLKSVWRKGDSVASVQKVVKEVPKPSYNKNEEEKSQTRGGEKVVSQTRAPQPPSKPQPLKPQQPSKPQPALLSKPSIAPPPVKKPVVLRDKGAAETSVKSKEKKSPILIDKFASKKPVVDPLIAQAVLAPPKPGKAPSPGKFKDDFRKKGALAGGGRRRRILDDEDVIQDASELNVSIPGAATARKGRKWSKASRKAARLQAARDAAPVKVEILEVGDSGMLVEELAYCLATSEGEILGYLYSKGIKPDGVQTIDKDMVKMICKEYDVEVIDADPVKVEGLVKKREILDEDDLDKLKDRPPVITIMGHVDHGKTTLLDYIRKSKVAASEAGGITQGIGAYKVQVPFDGKTLPCVFLDTPGHEAFGAMRARGASVTDIAVIVVAADDGIRSQTNEAIAHAKAAGVPIVIAINKIDKDGANPERVMQELSSIGLMPEDWGGNTPMVPISALKGKNVDDLLETVMLVAELQELKANPDRSAKGTVIEAGLDKSKGPLATFIVQNGSLRRGDIVVCWRSFWKGRALFDDGGKRVDEATPSIPVQVIGLNNVPIAGDVFEVVESLDAARERAETRAESLRNERISAKAGDGKITLSSLASAVSSGKLSGLDLHQLNIILKVDLQGSIEAVRKALQVLPQENVTLKFLLEATGDVNTSDVDLAVASKAIIMGFNAXTPGSVKSYADNKAVEIRLYRVIYELIDDVRKAMEGLLEPVEEQLTIGSAVVRAVFSSGSGRVAGCMVTEGKVLKDCGIRVKRKGKIVHVGIIDSLRRVKEIVKEVNAGLECGLGLEDFDDWEEGDIIEPSTQLRRRGPLKRPQHQWQLLWRE.

The segment covering 75-102 (GNSVSLDSNSNSSSSSKSGGDDGTGFVL) has biased composition (low complexity). 3 disordered regions span residues 75–132 (GNSV…VEER), 147–294 (EKLG…KEKK), and 319–340 (APPK…RKKG). The segment covering 152-175 (SKVNGDKNNGSVNKPVRNNANASP) has biased composition (polar residues). Residues 183–194 (SAASLKSKTLKS) are compositionally biased toward low complexity. A compositionally biased stretch (basic and acidic residues) spans 208–231 (VVKEVPKPSYNKNEEEKSQTRGGE). Pro residues predominate over residues 240–257 (PQPPSKPQPLKPQQPSKP). The segment covering 277-294 (VLRDKGAAETSVKSKEKK) has biased composition (basic and acidic residues). The region spanning 488–661 (DRPPVITIMG…MLVAELQELK (174 aa)) is the tr-type G domain. The G1 stretch occupies residues 497–504 (GHVDHGKT). 497–504 (GHVDHGKT) contributes to the GTP binding site. Residues 522-526 (GITQG) form a G2 region. Residues 547-550 (DTPG) are G3. GTP contacts are provided by residues 547–551 (DTPGH) and 601–604 (NKID). Positions 601-604 (NKID) are G4. The segment at 637–639 (SAL) is G5.

The protein belongs to the TRAFAC class translation factor GTPase superfamily. Classic translation factor GTPase family. IF-2 subfamily.

Its subcellular location is the plastid. The protein resides in the chloroplast. One of the essential components for the initiation of protein synthesis. Protects formylmethionyl-tRNA from spontaneous hydrolysis and promotes its binding to the 30S ribosomal subunits. Also involved in the hydrolysis of GTP during the formation of the 70S ribosomal complex. This Phaseolus vulgaris (Kidney bean) protein is Translation initiation factor IF-2, chloroplastic (IF2CP).